Consider the following 118-residue polypeptide: C-X-C motif chemokine 17 (118 aa).

Positions 1-22 are cleaved as a signal peptide; that stretch reads MKVLISSLLLLLPLMLMSVVSS. Cystine bridges form between cysteine 74–cysteine 102 and cysteine 76–cysteine 109.

The protein belongs to the intercrine alpha (chemokine CxC) family.

It is found in the secreted. Functionally, chemokine that acts as a chemoattractant for monocytes, macrophages and dendritic cells. Plays a role in angiogenesis and possibly in the development of tumors. Acts as an anti-inflammatory in the stomach. May play a role in the innate defense against infections. Activates the C-X-C chemokine receptor GPR35 to induce a rapid and transient rise in the level of intracellular calcium ions. This is C-X-C motif chemokine 17 (CXCL17) from Bos taurus (Bovine).